Consider the following 279-residue polypeptide: MAAPVRRTLLGVAGGWRRFERLWAGSLSSRSLALAAAPSSNGSPWRLLGALCLQRPPVVSKPLTPLQEEMASLLQQIEIERSLYSDHELRALDENQRLAKKKADLHDEEDEQDILLAQDLEDMWEQKFLQFKLGARITEADEKNDRTSLNRKLDRNLVLLVREKFGDQDVWILPQAEWQPGETLRGTAERTLATLSENNMEAKFLGNAPCGHYTFKFPQAMRTESNLGAKVFFFKALLLTGDFSQAGNKGHHVWVTKDELGDYLKPKYLAQVRRFVSDL.

Lys230 is modified (N6-acetyllysine).

It belongs to the mitochondrion-specific ribosomal protein mL46 family. In terms of assembly, component of the mitochondrial large ribosomal subunit (mt-LSU). Mature mammalian 55S mitochondrial ribosomes consist of a small (28S) and a large (39S) subunit. The 28S small subunit contains a 12S ribosomal RNA (12S mt-rRNA) and 30 different proteins. The 39S large subunit contains a 16S rRNA (16S mt-rRNA), a copy of mitochondrial valine transfer RNA (mt-tRNA(Val)), which plays an integral structural role, and 52 different proteins. mL46 is located at the central protuberance.

It localises to the mitochondrion. The protein is Large ribosomal subunit protein mL46 (MRPL46) of Homo sapiens (Human).